Consider the following 580-residue polypeptide: Anaphase-promoting complex subunit 7 (580 aa).

10 TPR repeats span residues 50 to 83 (IISFSLFGDSLFGKNEFVRSLKYFKQSLDILFKV), 107 to 140 (YELKYKISLCYIKINRNNLAISYLESIPFSSRGL), 141 to 175 (DTHLTIARLYKDIGKEKSKECIISYKEVIKLCPLC), 253 to 286 (VLEKLALSYLYHDEPSIINTFNIFQKIRLLDPYY), 321 to 354 (AETWTSVALFYFLKENVEKSLENVDRAISIKESH), 356 to 388 (FAHSLKGEILLSLDEPREALPSLERAFQLSKNI), 390 to 421 (TARELVRCHLILNQMKEALVVAETINNLSPDY), 422 to 456 (SKTMALLGMVLANQPEEREEARKILTKALTLSPHC), 458 to 490 (DTVLTLSKLNVVEGRFQEAIDILNSQLEYQETD), and 491 to 523 (LMHTEIAGVYLTKDYHEDAMIHYNSALEINPQY). The tract at residues 539 to 580 (GIDPDQELDQENDDDDQEEGEGENDQEENDDDDNDDDDEYIS) is disordered. Acidic residues predominate over residues 542-580 (PDQELDQENDDDDQEEGEGENDQEENDDDDNDDDDEYIS).

The protein belongs to the APC7 family. In terms of assembly, the APC/C is composed of at least 13 subunits that stay tightly associated throughout the cell cycle: anapc1, anapc2, anapc3, anapc4, anapc5, anapc6, anapc7, anapc8, anapc10, anapc11, cdc20, cdc26 and cdh1.

The protein resides in the nucleus. Its pathway is protein modification; protein ubiquitination. Functionally, component of the anaphase promoting complex/cyclosome (APC/C), a cell cycle-regulated E3 ubiquitin-protein ligase complex that controls progression through mitosis and the G1 phase of the cell cycle. The sequence is that of Anaphase-promoting complex subunit 7 (anapc7) from Dictyostelium discoideum (Social amoeba).